The primary structure comprises 214 residues: NADH-quinone oxidoreductase subunit C (214 aa).

Belongs to the complex I 30 kDa subunit family. As to quaternary structure, NDH-1 is composed of 14 different subunits. Subunits NuoB, C, D, E, F, and G constitute the peripheral sector of the complex.

The protein localises to the cell inner membrane. It catalyses the reaction a quinone + NADH + 5 H(+)(in) = a quinol + NAD(+) + 4 H(+)(out). Functionally, NDH-1 shuttles electrons from NADH, via FMN and iron-sulfur (Fe-S) centers, to quinones in the respiratory chain. The immediate electron acceptor for the enzyme in this species is believed to be ubiquinone. Couples the redox reaction to proton translocation (for every two electrons transferred, four hydrogen ions are translocated across the cytoplasmic membrane), and thus conserves the redox energy in a proton gradient. In Francisella tularensis subsp. mediasiatica (strain FSC147), this protein is NADH-quinone oxidoreductase subunit C.